An 831-amino-acid polypeptide reads, in one-letter code: Probable basic-leucine zipper transcription factor P (831 aa).

Disordered regions lie at residues 1-33 (MNHR…PSII) and 54-166 (NITS…IASR). The span at 54 to 85 (NITSSPSTSSSPPISTTTTTTTTTTTTATAKK) shows a compositional bias: low complexity. The segment covering 87 to 96 (NSKEKKKTTN) has biased composition (basic and acidic residues). A compositionally biased stretch (low complexity) spans 97 to 129 (KDNNNNNNNNNSNNQQQQQQQQQQQQQQQQQQQ). Positions 101–141 (NNNNNNNSNNQQQQQQQQQQQQQQQQQQQYEEEDDDEEDEG) form a coiled coil. Acidic residues predominate over residues 130–143 (YEEEDDDEEDEGGD). Positions 144-154 (DNTKVGKGEKM) are enriched in basic and acidic residues. The bZIP domain occupies 151-214 (GEKMKARRTN…LELLKFSQEV (64 aa)). Positions 153-173 (KMKARRTNQNIASRNYRQRKK) are basic motif. Residues 176–183 (IKEMEDKI) form a leucine-zipper region. Low complexity-rich tracts occupy residues 469-484 (SSSS…SSTS) and 497-510 (SSSN…SASS). Disordered stretches follow at residues 469-510 (SSSS…SASS), 658-697 (QQQA…HQNY), 715-771 (DATN…NTNK), and 787-810 (SLFS…QNDS). Residues 601–664 (AQQHAQQQAQ…QAAQQQAAQQ (64 aa)) are a coiled coil. Composition is skewed to low complexity over residues 674-695 (PPQH…QQHQ), 720-750 (NNNN…NNNN), and 787-800 (SLFS…NSQS).

The protein belongs to the bZIP family.

It localises to the nucleus. Probable transcriptional regulator. The polypeptide is Probable basic-leucine zipper transcription factor P (bzpP) (Dictyostelium discoideum (Social amoeba)).